Here is a 447-residue protein sequence, read N- to C-terminus: Probable arabinosyltransferase ARAD1 (447 aa).

Residues 1-6 (MARKSS) are Cytoplasmic-facing. A helical; Signal-anchor for type II membrane protein transmembrane segment spans residues 7–29 (LLKRAAIAVVSVIAIYVILNASV). The Lumenal portion of the chain corresponds to 30–447 (SRSLPSSSDL…TNQTGLITSI (418 aa)). Residues 32 to 41 (SLPSSSDLPR) show a composition bias toward low complexity. Residues 32-52 (SLPSSSDLPRQLIREDDDDEG) are disordered. N-linked (GlcNAc...) asparagine glycans are attached at residues asparagine 427, asparagine 432, and asparagine 439.

The protein belongs to the glycosyltransferase 47 family. As to quaternary structure, homodimer and heterodimer with ARAD2. As to expression, expressed in root vasculature, cotyledons, leaves, stems, vascular tissue of sepals, petals and stamens, pollen grains, mature siliques and abscission region of seeds.

Its subcellular location is the golgi apparatus membrane. Its function is as follows. Probable arabinosyl transferase responsible for the polymerization of arabinose into the arabinan of arabinogalactan. May function as inverting enzyme using UDP-beta-L-arabinopyranoside. May be important for arabinan side chains of rhamnogalacturonan I (RG-I), a major component of pectins. Cell wall pectic arabinans are involved in thigmomorphogenesis response of inflorescence stems to mechanical stress. The sequence is that of Probable arabinosyltransferase ARAD1 (ARAD1) from Arabidopsis thaliana (Mouse-ear cress).